The following is a 483-amino-acid chain: Siroheme synthase (483 aa).

The segment at 1–203 (MNYFPIFANL…RQNTLAEREL (203 aa)) is precorrin-2 dehydrogenase /sirohydrochlorin ferrochelatase. NAD(+) is bound by residues 22–23 (AV) and 43–44 (KH). Ser-128 carries the post-translational modification Phosphoserine. The tract at residues 214 to 483 (GFVSLVGAGP…LGTGQEQQAA (270 aa)) is uroporphyrinogen-III C-methyltransferase. Pro-223 provides a ligand contact to S-adenosyl-L-methionine. Residue Asp-246 is the Proton acceptor of the active site. Lys-268 serves as the catalytic Proton donor. S-adenosyl-L-methionine is bound by residues 299–301 (GGD), Val-304, 329–330 (TA), Met-381, and Gly-410.

The protein in the N-terminal section; belongs to the precorrin-2 dehydrogenase / sirohydrochlorin ferrochelatase family. This sequence in the C-terminal section; belongs to the precorrin methyltransferase family.

The enzyme catalyses uroporphyrinogen III + 2 S-adenosyl-L-methionine = precorrin-2 + 2 S-adenosyl-L-homocysteine + H(+). The catalysed reaction is precorrin-2 + NAD(+) = sirohydrochlorin + NADH + 2 H(+). It carries out the reaction siroheme + 2 H(+) = sirohydrochlorin + Fe(2+). The protein operates within cofactor biosynthesis; adenosylcobalamin biosynthesis; precorrin-2 from uroporphyrinogen III: step 1/1. Its pathway is cofactor biosynthesis; adenosylcobalamin biosynthesis; sirohydrochlorin from precorrin-2: step 1/1. It participates in porphyrin-containing compound metabolism; siroheme biosynthesis; precorrin-2 from uroporphyrinogen III: step 1/1. It functions in the pathway porphyrin-containing compound metabolism; siroheme biosynthesis; siroheme from sirohydrochlorin: step 1/1. The protein operates within porphyrin-containing compound metabolism; siroheme biosynthesis; sirohydrochlorin from precorrin-2: step 1/1. Multifunctional enzyme that catalyzes the SAM-dependent methylations of uroporphyrinogen III at position C-2 and C-7 to form precorrin-2 via precorrin-1. Then it catalyzes the NAD-dependent ring dehydrogenation of precorrin-2 to yield sirohydrochlorin. Finally, it catalyzes the ferrochelation of sirohydrochlorin to yield siroheme. This chain is Siroheme synthase, found in Neisseria meningitidis serogroup C / serotype 2a (strain ATCC 700532 / DSM 15464 / FAM18).